The following is a 289-amino-acid chain: Ribosomal RNA small subunit methyltransferase A (289 aa).

S-adenosyl-L-methionine is bound by residues N21, L23, G48, E69, D94, and N120.

It belongs to the class I-like SAM-binding methyltransferase superfamily. rRNA adenine N(6)-methyltransferase family. RsmA subfamily.

Its subcellular location is the cytoplasm. The enzyme catalyses adenosine(1518)/adenosine(1519) in 16S rRNA + 4 S-adenosyl-L-methionine = N(6)-dimethyladenosine(1518)/N(6)-dimethyladenosine(1519) in 16S rRNA + 4 S-adenosyl-L-homocysteine + 4 H(+). In terms of biological role, specifically dimethylates two adjacent adenosines (A1518 and A1519) in the loop of a conserved hairpin near the 3'-end of 16S rRNA in the 30S particle. May play a critical role in biogenesis of 30S subunits. In Actinobacillus pleuropneumoniae serotype 3 (strain JL03), this protein is Ribosomal RNA small subunit methyltransferase A.